The following is a 535-amino-acid chain: Dual specificity calcium/calmodulin-dependent 3',5'-cyclic nucleotide phosphodiesterase 1B (535 aa).

Positions 1–21 are disordered; that stretch reads MELSPRSPPEMLESDCPSPLE. Phosphoserine is present on residues serine 7 and serine 14. Calmodulin-binding regions lie at residues 26 to 46 and 117 to 140; these read PSKKMWIKLRSLLRYMVKQLE and EKPKFRSIVHAVQAGIFVERMFRR. Residues 145-502 form the PDEase domain; that stretch reads VGPTYSTAVH…QKWKERAASG (358 aa). Residue histidine 222 is the Proton donor of the active site. Residues histidine 226, histidine 262, aspartate 263, and aspartate 369 each contribute to the Zn(2+) site. Aspartate 263 is a binding site for Mg(2+). 2 disordered regions span residues 445–474 and 495–535; these read PLADDDSKSKSQPSFQWRQPSLDVDVGDPN and WKER…GNLD. The segment covering 454–463 has biased composition (polar residues); it reads KSQPSFQWRQ. Serine 465 and serine 513 each carry phosphoserine.

The protein belongs to the cyclic nucleotide phosphodiesterase family. PDE1 subfamily. As to quaternary structure, homodimer. Zn(2+) is required as a cofactor. Mg(2+) serves as cofactor.

It is found in the cytoplasm. The protein localises to the cytosol. It carries out the reaction a nucleoside 3',5'-cyclic phosphate + H2O = a nucleoside 5'-phosphate + H(+). The enzyme catalyses 3',5'-cyclic GMP + H2O = GMP + H(+). It catalyses the reaction 3',5'-cyclic AMP + H2O = AMP + H(+). Type I PDE are activated by the binding of calmodulin in the presence of Ca(2+). Its function is as follows. Cyclic nucleotide phosphodiesterase with a dual specificity for the second messengers cAMP and cGMP, which are key regulators of many important physiological processes. Has a preference for cGMP as a substrate. The protein is Dual specificity calcium/calmodulin-dependent 3',5'-cyclic nucleotide phosphodiesterase 1B of Cricetulus griseus (Chinese hamster).